The chain runs to 127 residues: Putative pre-16S rRNA nuclease (127 aa).

This sequence belongs to the YqgF nuclease family.

It is found in the cytoplasm. Functionally, could be a nuclease involved in processing of the 5'-end of pre-16S rRNA. The polypeptide is Putative pre-16S rRNA nuclease (Campylobacter jejuni subsp. jejuni serotype O:6 (strain 81116 / NCTC 11828)).